A 195-amino-acid polypeptide reads, in one-letter code: Probable GTP-binding protein EngB (195 aa).

The EngB-type G domain maps to 22–195; sequence GLPEIALAGR…WGAIKKMISR (174 aa). GTP-binding positions include 30 to 37, 57 to 61, 75 to 78, 142 to 145, and 174 to 176; these read GRSNVGKS, GKTQT, DVPG, TKAD, and FSS. The Mg(2+) site is built by Ser-37 and Thr-59.

It belongs to the TRAFAC class TrmE-Era-EngA-EngB-Septin-like GTPase superfamily. EngB GTPase family. Mg(2+) serves as cofactor.

Necessary for normal cell division and for the maintenance of normal septation. This is Probable GTP-binding protein EngB from Bacillus velezensis (strain DSM 23117 / BGSC 10A6 / LMG 26770 / FZB42) (Bacillus amyloliquefaciens subsp. plantarum).